Reading from the N-terminus, the 626-residue chain is MDDQNRNLILATGLSFVVILVWFLLFPPPEMVEDPNAIPPAAETGGVETDTGIALTPPVTVADAPAGADTTAPSEVALSEAARIDIDTPAVEGSISLLGGRIDDLSLRNYFTEVDGDQIVRLLSPVGSDDPYYALYGWTPSGDLGYADVPTSDTPWELESGTILTPDSPITLAWDNGSGLIFRRTIEIDDRFMFQVTQSVENTGGAEVNLAPYGIVARHGLPSDLQNFFILHEGVVRKVDGELSELGYSDLPDLDIIAREGVPAEVMEVETNGWIGFTDKYWMTTLIPGENQSFVSVVKYVPSAEIYQTEARLPYMSIAPGETAEVTTQLFAGAKEAEAIRDYENAEPGLIASLFGAEQDASRGEIPRFIDSIDWGWFYFLTKPLFWLLHWLNGAIGNMGLAIISLTLIVKAVLFPLAYRSYVSMAKMKELQPEIEKLKESAGDDRQKLQQGMMELYKKNKVNPAGGCLPILLQIPIFFSLYKVIFVTLELRHAPFFGWLNDLSAPDSSSIINLYGLLPNPAPEPESIMALIFIGILPLLLGISMWLQQKLNPAPTDAMQAQIFAWLPWVFMFMLGSFASGLLVYWIANNTLTFTQQYLIMRSQGFKPDVFGNIRSSFKKKAKEEK.

5 consecutive transmembrane segments (helical) span residues leucine 8 to proline 28, methionine 399 to tyrosine 419, leucine 469 to leucine 489, serine 527 to leucine 547, and isoleucine 563 to leucine 583.

This sequence belongs to the OXA1/ALB3/YidC family. Type 1 subfamily. In terms of assembly, interacts with the Sec translocase complex via SecD. Specifically interacts with transmembrane segments of nascent integral membrane proteins during membrane integration.

It localises to the cell inner membrane. Required for the insertion and/or proper folding and/or complex formation of integral membrane proteins into the membrane. Involved in integration of membrane proteins that insert both dependently and independently of the Sec translocase complex, as well as at least some lipoproteins. Aids folding of multispanning membrane proteins. The sequence is that of Membrane protein insertase YidC from Jannaschia sp. (strain CCS1).